A 125-amino-acid chain; its full sequence is Small ribosomal subunit protein uS12c (125 aa).

The protein belongs to the universal ribosomal protein uS12 family. In terms of assembly, part of the 30S ribosomal subunit.

The protein resides in the plastid. In terms of biological role, with S4 and S5 plays an important role in translational accuracy. Located at the interface of the 30S and 50S subunits. The chain is Small ribosomal subunit protein uS12c (rps12) from Euglena longa (Euglenophycean alga).